Here is a 354-residue protein sequence, read N- to C-terminus: GTPase Obg (354 aa).

The region spanning Met1–Leu159 is the Obg domain. The region spanning Ala160–Asp328 is the OBG-type G domain. GTP contacts are provided by residues Gly166–Ser173, Phe191–Ile195, Asp213–Gly216, Asn280–Asp283, and Ser309–Val311. Positions 173 and 193 each coordinate Mg(2+).

This sequence belongs to the TRAFAC class OBG-HflX-like GTPase superfamily. OBG GTPase family. In terms of assembly, monomer. Mg(2+) is required as a cofactor.

It is found in the cytoplasm. Its function is as follows. An essential GTPase which binds GTP, GDP and possibly (p)ppGpp with moderate affinity, with high nucleotide exchange rates and a fairly low GTP hydrolysis rate. Plays a role in control of the cell cycle, stress response, ribosome biogenesis and in those bacteria that undergo differentiation, in morphogenesis control. The protein is GTPase Obg of Picosynechococcus sp. (strain ATCC 27264 / PCC 7002 / PR-6) (Agmenellum quadruplicatum).